The primary structure comprises 361 residues: Protein RecA (361 aa).

77–84 is an ATP binding site; it reads GPESSGKT.

The protein belongs to the RecA family.

It is found in the cytoplasm. Can catalyze the hydrolysis of ATP in the presence of single-stranded DNA, the ATP-dependent uptake of single-stranded DNA by duplex DNA, and the ATP-dependent hybridization of homologous single-stranded DNAs. It interacts with LexA causing its activation and leading to its autocatalytic cleavage. The chain is Protein RecA from Sinorhizobium fredii (strain NBRC 101917 / NGR234).